The primary structure comprises 251 residues: NADPH-dependent oxidoreductase (251 aa).

The protein belongs to the flavin oxidoreductase frp family. It depends on FMN as a cofactor.

Functionally, reduces FMN, organic nitro compounds and disulfide DTNB. Involved in maintenance of the cellular redox state and the disulfide stress response. In Staphylococcus epidermidis (strain ATCC 35984 / DSM 28319 / BCRC 17069 / CCUG 31568 / BM 3577 / RP62A), this protein is NADPH-dependent oxidoreductase (nfrA).